Reading from the N-terminus, the 290-residue chain is 4-hydroxybenzoate octaprenyltransferase (290 aa).

The next 8 membrane-spanning stretches (helical) occupy residues 21 to 41 (IGTM…ADGM), 44 to 64 (LRVL…GCII), 97 to 117 (LFVV…PLVV), 143 to 163 (FLGV…TGEV), 168 to 188 (WWLF…YAMV), 211 to 231 (EIIG…GWSG), 235 to 255 (LLYG…QRLI), and 270 to 290 (NNWA…FAAL).

It belongs to the UbiA prenyltransferase family. Requires Mg(2+) as cofactor.

The protein localises to the cell inner membrane. It carries out the reaction all-trans-octaprenyl diphosphate + 4-hydroxybenzoate = 4-hydroxy-3-(all-trans-octaprenyl)benzoate + diphosphate. It functions in the pathway cofactor biosynthesis; ubiquinone biosynthesis. Its function is as follows. Catalyzes the prenylation of para-hydroxybenzoate (PHB) with an all-trans polyprenyl group. Mediates the second step in the final reaction sequence of ubiquinone-8 (UQ-8) biosynthesis, which is the condensation of the polyisoprenoid side chain with PHB, generating the first membrane-bound Q intermediate 3-octaprenyl-4-hydroxybenzoate. This is 4-hydroxybenzoate octaprenyltransferase from Shewanella amazonensis (strain ATCC BAA-1098 / SB2B).